Reading from the N-terminus, the 836-residue chain is Pentatricopeptide repeat-containing protein At1g79490, mitochondrial (836 aa).

The N-terminal 85 residues, 1-85 (MIRGRTAKVI…QCRSIVRRFC (85 aa)), are a transit peptide targeting the mitochondrion. 12 PPR repeats span residues 204-238 (SDECYVVLFDGLNQGRDFVGIQSLFEEMVQDSSSH), 242-276 (SFNAYNQVIQYLAKAEKLEVAFCCFKKAQESGCKI), 277-311 (DTQTYNNLMMLFLNKGLPYKAFEIYESMEKTDSLL), 312-346 (DGSTYELIIPSLAKSGRLDAAFKLFQQMKERKLRP), 347-381 (SFSVFSSLVDSMGKAGRLDTSMKVYMEMQGFGHRP), 382-416 (SATMFVSLIDSYAKAGKLDTALRLWDEMKKSGFRP), 417-451 (NFGLYTMIIESHAKSGKLEVAMTVFKDMEKAGFLP), 452-486 (TPSTYSCLLEMHAGSGQVDSAMKIYNSMTNAGLRP), 487-521 (GLSSYISLLTLLANKRLVDVAGKILLEMKAMGYSV), 528-555 (VLMIYIKDASVDLALKWLRFMGSSGIKT), 556-590 (NNFIIRQLFESCMKNGLYDSARPLLETLVHSAGKV), and 591-625 (DLVLYTSILAHLVRCQDEDKERQLMSILSATKHKA). A Smr domain is found at 710–786 (LDVRNLSVGA…APGELVMEWF (77 aa)).

The protein belongs to the PPR family. P subfamily.

The protein resides in the mitochondrion. In Arabidopsis thaliana (Mouse-ear cress), this protein is Pentatricopeptide repeat-containing protein At1g79490, mitochondrial (EMB2217).